A 674-amino-acid chain; its full sequence is CRS2-associated factor 1, chloroplastic (674 aa).

The transit peptide at 1–54 (MATARLPSRSFLSPAQQSYPRLPASVRLCLSHHEQPPTGPKRHRRAATSHPAFS) directs the protein to the chloroplast. Positions 31–61 (SHHEQPPTGPKRHRRAATSHPAFSAAARGRA) are disordered. The span at 48-57 (TSHPAFSAAA) shows a compositional bias: low complexity. CRM domains follow at residues 183 to 279 (EPLT…TRPC) and 301 to 397 (GGLT…LPPL). Positions 554 to 576 (GLLCLLEQAIHSGRALVLSEDEL) are CRS2 binding.

As to quaternary structure, interacts with CRS2 and RNA. Part of large ribonucleo-protein complexes that include group IIB introns, CRS2 and CAF1.

It is found in the plastid. The protein resides in the chloroplast stroma. Its function is as follows. Required for the splicing of group IIB introns in chloroplasts. Forms splicing particles with CRS2. Interacts with RNA and confers intron specificity of the splicing particles. This chain is CRS2-associated factor 1, chloroplastic (CAF1), found in Zea mays (Maize).